We begin with the raw amino-acid sequence, 122 residues long: Small ribosomal subunit protein uS13 (122 aa).

The tract at residues 95–122 is disordered; the sequence is GLPVRGQRTHTNARTRKGPAKPIAGKKK.

The protein belongs to the universal ribosomal protein uS13 family. As to quaternary structure, part of the 30S ribosomal subunit. Forms a loose heterodimer with protein S19. Forms two bridges to the 50S subunit in the 70S ribosome.

Functionally, located at the top of the head of the 30S subunit, it contacts several helices of the 16S rRNA. In the 70S ribosome it contacts the 23S rRNA (bridge B1a) and protein L5 of the 50S subunit (bridge B1b), connecting the 2 subunits; these bridges are implicated in subunit movement. Contacts the tRNAs in the A and P-sites. In Rhodospirillum rubrum (strain ATCC 11170 / ATH 1.1.1 / DSM 467 / LMG 4362 / NCIMB 8255 / S1), this protein is Small ribosomal subunit protein uS13.